The sequence spans 353 residues: Holliday junction branch migration complex subunit RuvB (353 aa).

The interval 4–186 is large ATPase domain (RuvB-L); it reads ADRLIAATHS…FGIVQRLEFY (183 aa). ATP contacts are provided by residues Ile-25, Arg-26, Gly-67, Lys-70, Thr-71, Thr-72, 133–135, Arg-176, Tyr-186, and Arg-223; that span reads EDF. Thr-71 provides a ligand contact to Mg(2+). Positions 187–257 are small ATPAse domain (RuvB-S); that stretch reads STADLATIVS…VADLALNLLD (71 aa). A head domain (RuvB-H) region spans residues 260 to 353; sequence EHGFDHQDRR…VDEFLDAVDD (94 aa). Positions 296, 315, and 320 each coordinate DNA.

Belongs to the RuvB family. In terms of assembly, homohexamer. Forms an RuvA(8)-RuvB(12)-Holliday junction (HJ) complex. HJ DNA is sandwiched between 2 RuvA tetramers; dsDNA enters through RuvA and exits via RuvB. An RuvB hexamer assembles on each DNA strand where it exits the tetramer. Each RuvB hexamer is contacted by two RuvA subunits (via domain III) on 2 adjacent RuvB subunits; this complex drives branch migration. In the full resolvosome a probable DNA-RuvA(4)-RuvB(12)-RuvC(2) complex forms which resolves the HJ.

Its subcellular location is the cytoplasm. It catalyses the reaction ATP + H2O = ADP + phosphate + H(+). The RuvA-RuvB-RuvC complex processes Holliday junction (HJ) DNA during genetic recombination and DNA repair, while the RuvA-RuvB complex plays an important role in the rescue of blocked DNA replication forks via replication fork reversal (RFR). RuvA specifically binds to HJ cruciform DNA, conferring on it an open structure. The RuvB hexamer acts as an ATP-dependent pump, pulling dsDNA into and through the RuvAB complex. RuvB forms 2 homohexamers on either side of HJ DNA bound by 1 or 2 RuvA tetramers; 4 subunits per hexamer contact DNA at a time. Coordinated motions by a converter formed by DNA-disengaged RuvB subunits stimulates ATP hydrolysis and nucleotide exchange. Immobilization of the converter enables RuvB to convert the ATP-contained energy into a lever motion, pulling 2 nucleotides of DNA out of the RuvA tetramer per ATP hydrolyzed, thus driving DNA branch migration. The RuvB motors rotate together with the DNA substrate, which together with the progressing nucleotide cycle form the mechanistic basis for DNA recombination by continuous HJ branch migration. Branch migration allows RuvC to scan DNA until it finds its consensus sequence, where it cleaves and resolves cruciform DNA. The chain is Holliday junction branch migration complex subunit RuvB from Pseudomonas fluorescens (strain Pf0-1).